The primary structure comprises 276 residues: 5'-nucleotidase SurE (276 aa).

A divalent metal cation contacts are provided by Asp-14, Asp-15, Ser-46, and Asn-104.

This sequence belongs to the SurE nucleotidase family. A divalent metal cation serves as cofactor.

It localises to the cytoplasm. The enzyme catalyses a ribonucleoside 5'-phosphate + H2O = a ribonucleoside + phosphate. Nucleotidase that shows phosphatase activity on nucleoside 5'-monophosphates. The polypeptide is 5'-nucleotidase SurE (Crocosphaera subtropica (strain ATCC 51142 / BH68) (Cyanothece sp. (strain ATCC 51142))).